The chain runs to 339 residues: Ketol-acid reductoisomerase (NADP(+)) (339 aa).

Residues 1-182 (MRVYYDRDAD…GGGRSGVIET (182 aa)) form the KARI N-terminal Rossmann domain. Residues 24–27 (YGSQ), arginine 48, serine 51, threonine 53, and 83–86 (DELQ) each bind NADP(+). Histidine 108 is an active-site residue. NADP(+) is bound at residue glycine 134. The region spanning 183-328 (TFKEECETDL…EKLRGMMPWI (146 aa)) is the KARI C-terminal knotted domain. Mg(2+)-binding residues include aspartate 191, glutamate 195, glutamate 227, and glutamate 231. A substrate-binding site is contributed by serine 252.

Belongs to the ketol-acid reductoisomerase family. Requires Mg(2+) as cofactor.

It catalyses the reaction (2R)-2,3-dihydroxy-3-methylbutanoate + NADP(+) = (2S)-2-acetolactate + NADPH + H(+). The catalysed reaction is (2R,3R)-2,3-dihydroxy-3-methylpentanoate + NADP(+) = (S)-2-ethyl-2-hydroxy-3-oxobutanoate + NADPH + H(+). The protein operates within amino-acid biosynthesis; L-isoleucine biosynthesis; L-isoleucine from 2-oxobutanoate: step 2/4. It functions in the pathway amino-acid biosynthesis; L-valine biosynthesis; L-valine from pyruvate: step 2/4. Its function is as follows. Involved in the biosynthesis of branched-chain amino acids (BCAA). Catalyzes an alkyl-migration followed by a ketol-acid reduction of (S)-2-acetolactate (S2AL) to yield (R)-2,3-dihydroxy-isovalerate. In the isomerase reaction, S2AL is rearranged via a Mg-dependent methyl migration to produce 3-hydroxy-3-methyl-2-ketobutyrate (HMKB). In the reductase reaction, this 2-ketoacid undergoes a metal-dependent reduction by NADPH to yield (R)-2,3-dihydroxy-isovalerate. The protein is Ketol-acid reductoisomerase (NADP(+)) of Brucella anthropi (strain ATCC 49188 / DSM 6882 / CCUG 24695 / JCM 21032 / LMG 3331 / NBRC 15819 / NCTC 12168 / Alc 37) (Ochrobactrum anthropi).